The sequence spans 30 residues: Photosystem I reaction center subunit XII (30 aa).

Residues 5–25 traverse the membrane as a helical segment; it reads SQIFFALCIALTAAVLAIGLG.

Belongs to the PsaM family.

The protein localises to the plastid. The protein resides in the chloroplast thylakoid membrane. The protein is Photosystem I reaction center subunit XII of Emiliania huxleyi (Coccolithophore).